Here is a 210-residue protein sequence, read N- to C-terminus: Prolactin-2 (210 aa).

The first 23 residues, 1–23 (MARRSQGTKLHLAVLCLVVSCHA), serve as a signal peptide directing secretion. Cystine bridges form between cysteine 69-cysteine 183 and cysteine 200-cysteine 210.

It belongs to the somatotropin/prolactin family.

Its subcellular location is the secreted. In Oncorhynchus keta (Chum salmon), this protein is Prolactin-2 (prl2).